The following is a 343-amino-acid chain: Phosphoribosylformylglycinamidine cyclo-ligase (343 aa).

This sequence belongs to the AIR synthase family.

It localises to the cytoplasm. The enzyme catalyses 2-formamido-N(1)-(5-O-phospho-beta-D-ribosyl)acetamidine + ATP = 5-amino-1-(5-phospho-beta-D-ribosyl)imidazole + ADP + phosphate + H(+). Its pathway is purine metabolism; IMP biosynthesis via de novo pathway; 5-amino-1-(5-phospho-D-ribosyl)imidazole from N(2)-formyl-N(1)-(5-phospho-D-ribosyl)glycinamide: step 2/2. The polypeptide is Phosphoribosylformylglycinamidine cyclo-ligase (Parasynechococcus marenigrum (strain WH8102)).